The following is a 467-amino-acid chain: H(+)/Cl(-) exchange transporter ClcA (467 aa).

Residues 1–30 (MKSQTIPTRRVRGFRRAAVIRQLLSRDKTP) are Cytoplasmic-facing. The helical transmembrane segment at 31–67 (LTILLLASLTGVLAGLAGVAFEKAVAWVTAHRIEGLA) threads the bilayer. The Periplasmic segment spans residues 68 to 74 (QVAHIPW). The helical transmembrane segment at 75–98 (LVWLLAFLFSALLAMVGYFLVRRF) threads the bilayer. Residues 99–106 (APEAGGSG) lie on the Cytoplasmic side of the membrane. The Selectivity filter part_1 motif lies at 104–108 (GSGIP). Ser105 provides a ligand contact to chloride. Positions 107-114 (IPEIEGAL) form an intramembrane region, helical. Over 115–121 (EELRPVR) the chain is Cytoplasmic. A helical transmembrane segment spans residues 122-139 (WWRVLPVKFFGGMGTLGA). Residues 140 to 145 (GMVLGR) are Periplasmic-facing. The Selectivity filter part_2 motif lies at 144-148 (GREGP). Residues 146–164 (EGPMVQMGGNIGRMVLDIF) form a helical membrane-spanning segment. The Cytoplasmic portion of the chain corresponds to 165–174 (HRPDAEARHT). Intramembrane regions (helical) lie at residues 175-187 (LLATGAAAGLAAA) and 191-199 (PLAGILFII). The Cytoplasmic portion of the chain corresponds to 200 to 212 (EEMRTQFHYNLIS). Residues 213 to 230 (IKAVFTGVIMSTIVFRIF) traverse the membrane as a helical segment. Residues 231–250 (NGEKSVIEVGQLTDAPVYTL) are Periplasmic-facing. The chain crosses the membrane as a helical span at residues 251–279 (WLYLLLGIIFGAVGPLFNRLVLGMQDVFA). Over 280–285 (RIHGGN) the chain is Cytoplasmic. The helical transmembrane segment at 286–307 (TTRWVLLGGAIGGACGLLALWE) threads the bilayer. The Periplasmic segment spans residues 308–327 (PAAAGGGFGLIPIAAAGNFT). A helical transmembrane segment spans residues 328-347 (VGMLLFIFIARVVTTVFCFS). Residues 348–352 (SGAPG) lie on the Cytoplasmic side of the membrane. Residues 353-357 (GIFAP) carry the Selectivity filter part_3 motif. A helical transmembrane segment spans residues 353–374 (GIFAPMLALGTLLGSAFGMACA). Chloride-binding residues include Ile354 and Phe355. The Periplasmic segment spans residues 375–384 (AWFPQWHLQA). The helical intramembrane region spans 385 to 399 (GTFAIAGMGALLAAS). An intramembrane region (note=Loop between two helices) is located at residues 400 to 402 (VRA). Positions 403–414 (PITGIVLVLEMT) form an intramembrane region, helical. Residues 415 to 419 (DNYQL) constitute an intramembrane region (note=Loop between two helices). A helical membrane pass occupies residues 420-436 (ILPMIITCLGATLLAQF). Residues 437 to 467 (LGGKPLYSTILARTLAKQEAERQAQADGRNT) lie on the Cytoplasmic side of the membrane. Tyr443 is a binding site for chloride.

It belongs to the chloride channel (TC 2.A.49) family. ClcA subfamily. In terms of assembly, homodimer.

The protein resides in the cell inner membrane. The catalysed reaction is 2 chloride(in) + H(+)(out) = 2 chloride(out) + H(+)(in). Functionally, proton-coupled chloride transporter. Functions as antiport system and exchanges two chloride ions for 1 proton. Probably acts as an electrical shunt for an outwardly-directed proton pump that is linked to amino acid decarboxylation, as part of the extreme acid resistance (XAR) response. This Cronobacter sakazakii (strain ATCC BAA-894) (Enterobacter sakazakii) protein is H(+)/Cl(-) exchange transporter ClcA.